Consider the following 363-residue polypeptide: Probable iron/ascorbate oxidoreductase DDB_G0283291 (363 aa).

One can recognise a Fe2OG dioxygenase domain in the interval 197–306 (IFNYPSIISS…RISFPLFFDP (110 aa)). The Fe cation site is built by His-230, Asp-232, and His-286. A 2-oxoglutarate-binding site is contributed by Arg-297.

The protein belongs to the iron/ascorbate-dependent oxidoreductase family. Fe(2+) is required as a cofactor.

The sequence is that of Probable iron/ascorbate oxidoreductase DDB_G0283291 from Dictyostelium discoideum (Social amoeba).